We begin with the raw amino-acid sequence, 1104 residues long: Transient receptor potential cation channel subfamily M member 8 (1104 aa).

The segment at 1–22 (MSFEGARLSMRSRRNGTMGSTR) is disordered. Topologically, residues 1–733 (MSFEGARLSM…LWYYVAFFTS (733 aa)) are cytoplasmic. A helical membrane pass occupies residues 734–758 (PFVVFSWNVVFYIAFLLLFAYVLLM). Residues 759-765 (DFHSVPH) lie on the Extracellular side of the membrane. Residues 766-789 (TPELILYALVFVLFCDEVRQWYMN) form a helical membrane-spanning segment. Residues glutamate 782 and glutamine 785 each coordinate Ca(2+). Over 790–796 (GVNYFTD) the chain is Cytoplasmic. Residues 797-817 (LWNVMDTLGLFYFIAGIVFRL) form a helical membrane-spanning segment. Ca(2+) is bound by residues asparagine 799 and aspartate 802. The Extracellular segment spans residues 818-822 (HSSNK). Residues 823-848 (SSLYSGRVIFCLDYIIFTLRLIHIFT) form a helical membrane-spanning segment. The Cytoplasmic segment spans residues 849-853 (VSRNL). Residues 854–890 (GPKIIMLQRMLIDVFFFLFLFAVWMVAFGVARQGILR) traverse the membrane as a helical segment. The Extracellular segment spans residues 891 to 895 (QNEQR). Residues 896-912 (WRWIFRSVIYEPYLAMF) constitute an intramembrane region (pore-forming). At 913–953 (GQVPSDVDSTTYDFSHCTFSGNESKPLCVELDEHNLPRFPE) the chain is on the extracellular side. N-linked (GlcNAc...) (complex) asparagine glycosylation occurs at asparagine 934. A helical transmembrane segment spans residues 954–984 (WITIPLVCIYMLSTNILLVNLLVAMFGYTVG). Topologically, residues 985 to 1104 (IVQENNDQVW…LLKEIANNIK (120 aa)) are cytoplasmic. Residues 1069 to 1104 (TKANDNSEEMRHRFRQLDSKLNDLKSLLKEIANNIK) adopt a coiled-coil conformation.

This sequence belongs to the transient receptor (TC 1.A.4) family. LTrpC subfamily. TRPM8 sub-subfamily. Homotetramer. Interacts (via N-terminus and C-terminus domains) with TCAF1; the interaction stimulates TRPM8 channel activity. Interacts (via N-terminus and C-terminus domains) with TCAF2; the interaction inhibits TRPM8 channel activity. N-glycosylation is not essential for but facilitates cell surface expression, multimerization, association with lipid rafts and ion channel activity. Expressed in dorsal root and trigeminal ganglia. Specifically expressed in a subset of pain- and temperature-sensing neurons. Not expressed in heavily myelinated neurons. Not expressed in neurons expressing TRPA1 or TRPV1.

Its subcellular location is the cell membrane. The protein localises to the membrane raft. The catalysed reaction is Ca(2+)(in) = Ca(2+)(out). The enzyme catalyses Na(+)(in) = Na(+)(out). It catalyses the reaction K(+)(in) = K(+)(out). Its activity is regulated as follows. Activated by cold temperatures and by both natural and synthetic cooling compounds such as menthol and icilin. Activation of the channel requires the presence of PI(4,5)P2; PI(4,5)P2 is necessary to gate the channel. Activated by intracellular Ca(2+). Non-selective ion channel permeable to monovalent and divalent cations, including Na(+), K(+), and Ca(2+), with higher permeability for Ca(2+). Activated by multiple factors, such as temperature, voltage, pressure, and changes in osmolality. Activated by cool temperatures (&lt;23-28 degrees Celsius) and by chemical ligands evoking a sensation of coolness, such as menthol and icilin, therefore plays a central role in the detection of environmental cold temperatures. TRPM8 is a voltage-dependent channel; its activation by cold or chemical ligands shifts its voltage thresholds towards physiological membrane potentials, leading to the opening of the channel. In addition to its critical role in temperature sensing, regulates basal tear secretion by sensing evaporation-induced cooling and changes in osmolality. The protein is Transient receptor potential cation channel subfamily M member 8 (Trpm8) of Mus musculus (Mouse).